Reading from the N-terminus, the 185-residue chain is Ribosome-recycling factor (185 aa).

Belongs to the RRF family.

It localises to the cytoplasm. Its function is as follows. Responsible for the release of ribosomes from messenger RNA at the termination of protein biosynthesis. May increase the efficiency of translation by recycling ribosomes from one round of translation to another. The polypeptide is Ribosome-recycling factor (Shewanella sp. (strain W3-18-1)).